We begin with the raw amino-acid sequence, 107 residues long: Protamine-2 (107 aa).

The tract at residues 1–94 (MVRYRMRSPS…RRGCRRSRRR (94 aa)) is disordered. Residues Ser-8, Ser-10, and Ser-33 each carry the phosphoserine modification. Residues 43-94 (THRGHHHHRHRRCSRKRLHRIHKRRRSCRRRRRHSCRHRRRHRRGCRRSRRR) show a composition bias toward basic residues.

It belongs to the protamine P2 family. In terms of assembly, interacts with TDRP. In terms of processing, proteolytic processing into mature chains is required for histone eviction during spermatogenesis. Transition proteins (TNP1 and TNP2) are required for processing. Expressed in spermatids (at protein level).

Its subcellular location is the nucleus. The protein localises to the chromosome. In terms of biological role, protamines substitute for histones in the chromatin of sperm during the haploid phase of spermatogenesis. They compact sperm DNA into a highly condensed, stable and inactive complex. The sequence is that of Protamine-2 (Prm2) from Mus musculus (Mouse).